The primary structure comprises 427 residues: Glutamate-1-semialdehyde 2,1-aminomutase 1 (427 aa).

At lysine 267 the chain carries N6-(pyridoxal phosphate)lysine.

This sequence belongs to the class-III pyridoxal-phosphate-dependent aminotransferase family. HemL subfamily. As to quaternary structure, homodimer. Requires pyridoxal 5'-phosphate as cofactor.

The protein resides in the cytoplasm. The enzyme catalyses (S)-4-amino-5-oxopentanoate = 5-aminolevulinate. It participates in porphyrin-containing compound metabolism; protoporphyrin-IX biosynthesis; 5-aminolevulinate from L-glutamyl-tRNA(Glu): step 2/2. In Macrococcus caseolyticus (strain JCSC5402) (Macrococcoides caseolyticum), this protein is Glutamate-1-semialdehyde 2,1-aminomutase 1.